A 169-amino-acid polypeptide reads, in one-letter code: Disulfide bond formation protein B (169 aa).

Over 1–8 (MRLSVRWV) the chain is Cytoplasmic. The chain crosses the membrane as a helical span at residues 9–25 (FFLGFFLCALMLAIAGY). Residues 26 to 43 (FQFVENLEPCPLCILSRV) are Periplasmic-facing. Residues Cys-35 and Cys-38 are joined by a disulfide bond. A helical transmembrane segment spans residues 44–60 (AVLAIGGVFLVAALHNP). Over 61-67 (KSWGIKV) the chain is Cytoplasmic. Residues 68-84 (YALLGFVVTLIGIGITG) form a helical membrane-spanning segment. At 85–141 (RHVWLQSLPADQVPACGPGLNFMLDNFPLTETLELVFRGSGECAEVQWSFLGLTIPG) the chain is on the periplasmic side. A disulfide bridge links Cys-100 with Cys-127. Residues 142–160 (WTLVAFLFLGVISLWQMGR) form a helical membrane-spanning segment. Over 161 to 169 (TGGGAGKLT) the chain is Cytoplasmic.

Belongs to the DsbB family.

Its subcellular location is the cell inner membrane. In terms of biological role, required for disulfide bond formation in some periplasmic proteins. Acts by oxidizing the DsbA protein. In Nitrosococcus oceani (strain ATCC 19707 / BCRC 17464 / JCM 30415 / NCIMB 11848 / C-107), this protein is Disulfide bond formation protein B.